The primary structure comprises 194 residues: Fe/S biogenesis protein NfuA (194 aa).

Positions 151 and 154 each coordinate [4Fe-4S] cluster.

The protein belongs to the NfuA family. As to quaternary structure, homodimer. The cofactor is [4Fe-4S] cluster.

In terms of biological role, involved in iron-sulfur cluster biogenesis. Binds a 4Fe-4S cluster, can transfer this cluster to apoproteins, and thereby intervenes in the maturation of Fe/S proteins. Could also act as a scaffold/chaperone for damaged Fe/S proteins. The chain is Fe/S biogenesis protein NfuA from Aliivibrio salmonicida (strain LFI1238) (Vibrio salmonicida (strain LFI1238)).